The following is a 1940-amino-acid chain: Rho GTPase-activating protein 32 (1940 aa).

One can recognise a PX; atypical domain in the interval 154–248; that stretch reads SKELVFLVQI…LTWMEIDNKG (95 aa). The SH3 domain occupies 262-324; that stretch reads PAIAAAHVIK…PSECVELIND (63 aa). The 196-residue stretch at 375 to 570 folds into the Rho-GAP domain; sequence CDLGEHLLNS…FILNHVEVLF (196 aa). Disordered stretches follow at residues 646-746, 1035-1163, 1219-1264, 1430-1454, and 1675-1786; these read FPSE…LSAS, RANQ…FSVT, FTTG…PPVR, KHPRSRNKPDYMPSMSPGVRSYTED, and RSRS…HSSA. Residues 1047 to 1061 show a composition bias toward polar residues; the sequence is PQGASASESPQELSH. Low complexity-rich tracts occupy residues 1081-1094 and 1145-1163; these read LALALAESAQQASA and SRKTSPATPPSTTSSFSVT. The span at 1691–1707 shows a compositional bias: basic and acidic residues; the sequence is ETKDVRYPGRTEGDERT. The span at 1725 to 1734 shows a compositional bias: polar residues; the sequence is PQKQSGSSRS. Positions 1736 to 1755 are enriched in basic and acidic residues; the sequence is MQHDISTEQHSQDTLHRQPS.

It belongs to the PX domain-containing GAP family.

Its subcellular location is the cytoplasm. The protein localises to the membrane. It is found in the cell membrane. In terms of biological role, GTPase-activating protein (GAP) promoting GTP hydrolysis on RHOA, CDC42 and RAC1 small GTPases. The sequence is that of Rho GTPase-activating protein 32 (arhgap32) from Xenopus laevis (African clawed frog).